A 293-amino-acid chain; its full sequence is Ribosomal RNA small subunit methyltransferase A (293 aa).

Asparagine 29, leucine 31, glycine 56, glutamate 77, aspartate 102, and asparagine 127 together coordinate S-adenosyl-L-methionine.

Belongs to the class I-like SAM-binding methyltransferase superfamily. rRNA adenine N(6)-methyltransferase family. RsmA subfamily.

The protein localises to the cytoplasm. It catalyses the reaction adenosine(1518)/adenosine(1519) in 16S rRNA + 4 S-adenosyl-L-methionine = N(6)-dimethyladenosine(1518)/N(6)-dimethyladenosine(1519) in 16S rRNA + 4 S-adenosyl-L-homocysteine + 4 H(+). Specifically dimethylates two adjacent adenosines (A1518 and A1519) in the loop of a conserved hairpin near the 3'-end of 16S rRNA in the 30S particle. May play a critical role in biogenesis of 30S subunits. This is Ribosomal RNA small subunit methyltransferase A from Lysinibacillus sphaericus (strain C3-41).